Consider the following 86-residue polypeptide: Toxin Td8 (86 aa).

An N-terminal signal peptide occupies residues 1-20 (MTRFVLFLSCFFLIGMVVEC). An LCN-type CS-alpha/beta domain is found at 21 to 83 (KDGYLVGDDG…IWNSATNRCR (63 aa)). Disulfide bonds link C31/C82, C35/C57, C43/C63, and C47/C65. An Arginine amide modification is found at R83.

As to expression, expressed by the venom gland.

It localises to the secreted. Beta toxins bind voltage-independently at site-4 of sodium channels (Nav) and shift the voltage of activation toward more negative potentials thereby affecting sodium channel activation and promoting spontaneous and repetitive firing. The sequence is that of Toxin Td8 from Tityus discrepans (Venezuelan scorpion).